The sequence spans 475 residues: Ribulose bisphosphate carboxylase large chain (475 aa).

Residues 1–2 (MS) constitute a propeptide that is removed on maturation. Residue Pro-3 is modified to N-acetylproline. N6,N6,N6-trimethyllysine is present on Lys-14. Residues Asn-123 and Thr-173 each contribute to the substrate site. The active-site Proton acceptor is the Lys-175. Residue Lys-177 participates in substrate binding. Mg(2+) is bound by residues Lys-201, Asp-203, and Glu-204. Lys-201 carries the post-translational modification N6-carboxylysine. The active-site Proton acceptor is the His-294. Substrate is bound by residues Arg-295, His-327, and Ser-379.

It belongs to the RuBisCO large chain family. Type I subfamily. As to quaternary structure, heterohexadecamer of 8 large chains and 8 small chains; disulfide-linked. The disulfide link is formed within the large subunit homodimers. It depends on Mg(2+) as a cofactor. In terms of processing, the disulfide bond which can form in the large chain dimeric partners within the hexadecamer appears to be associated with oxidative stress and protein turnover.

The protein resides in the plastid. It is found in the chloroplast. The enzyme catalyses 2 (2R)-3-phosphoglycerate + 2 H(+) = D-ribulose 1,5-bisphosphate + CO2 + H2O. The catalysed reaction is D-ribulose 1,5-bisphosphate + O2 = 2-phosphoglycolate + (2R)-3-phosphoglycerate + 2 H(+). In terms of biological role, ruBisCO catalyzes two reactions: the carboxylation of D-ribulose 1,5-bisphosphate, the primary event in carbon dioxide fixation, as well as the oxidative fragmentation of the pentose substrate in the photorespiration process. Both reactions occur simultaneously and in competition at the same active site. This Illicium oligandrum (Star anise) protein is Ribulose bisphosphate carboxylase large chain.